We begin with the raw amino-acid sequence, 325 residues long: Reaction center protein M chain (325 aa).

Transmembrane regions (helical) follow at residues 53-79, 111-140, and 143-168; these read LGFTGTLSIIFGFMAIFIIGFNMLASV, EGGWWLMAGFFLTMSILLWWVRTYKRAEAL, and SQHLSWAFAAAIFFYLSLGFIRPVMM. (7R,8Z)-bacteriochlorophyll b-binding residues include H182 and H202. The chain crosses the membrane as a helical span at residues 198-226; it reads YNPFHMLSIAFLYGSALLFAMHGATILAV. Positions 219 and 234 each coordinate Fe cation. Residue W252 participates in a ubiquinone binding. H266 lines the Fe cation pocket.

This sequence belongs to the reaction center PufL/M/PsbA/D family. As to quaternary structure, reaction center is composed of four bacteriochlorophylls, two bacteriopheophytins, two ubiquinones, one iron, and two highly hydrophobic polypeptide chains (designated L and M).

The protein resides in the cellular chromatophore membrane. The reaction center is a membrane-bound complex that mediates the initial photochemical event in the electron transfer process of photosynthesis. This Allochromatium vinosum (strain ATCC 17899 / DSM 180 / NBRC 103801 / NCIMB 10441 / D) (Chromatium vinosum) protein is Reaction center protein M chain (pufM).